Consider the following 438-residue polypeptide: Vasoactive intestinal polypeptide receptor 2 (438 aa).

A signal peptide spans 1–23; sequence MRTLLPPALLTCWLLAPVNSIHP. At 24–124 the chain is on the extracellular side; that stretch reads ECRFHLEIQE…EDESKITFYI (101 aa). Intrachain disulfides connect Cys38-Cys61, Cys52-Cys93, and Cys75-Cys109. Residues Asn58, Asn88, and Asn92 are each glycosylated (N-linked (GlcNAc...) asparagine). A helical membrane pass occupies residues 125 to 150; it reads LVKAIYTLGYSVSLMSLATGSIILCL. Topologically, residues 151 to 158 are cytoplasmic; sequence FRKLHCTR. The chain crosses the membrane as a helical span at residues 159–180; sequence NYIHLNLFLSFILRAISVLVKD. The Extracellular portion of the chain corresponds to 181–203; that stretch reads DVLYSSSGTLHCPDQPSSWVGCK. Cys202 and Cys271 are disulfide-bonded. A helical membrane pass occupies residues 204 to 228; the sequence is LSLVFLQYCIMANFFWLLVEGLYLH. Residues 229-239 lie on the Cytoplasmic side of the membrane; sequence TLLVAMLPPRR. Residues 240 to 261 form a helical membrane-spanning segment; it reads CFLAYLLIGWGLPTVCIGAWTA. Residues 262 to 280 are Extracellular-facing; that stretch reads ARLYLEDTGCWDTNDHSVP. A helical membrane pass occupies residues 281–304; it reads WWVIRIPILISIIVNFVLFISIIR. The Cytoplasmic segment spans residues 305–325; sequence ILLQKLTSPDVGGNDQSQYKR. The chain crosses the membrane as a helical span at residues 326–346; it reads LAKSTLLLIPLFGVHYMVFAV. Residues 347–354 lie on the Extracellular side of the membrane; that stretch reads FPISISSK. The helical transmembrane segment at 355 to 378 threads the bilayer; the sequence is YQILFELCLGSFQGLVVAVLYCFL. The Cytoplasmic portion of the chain corresponds to 379–438; that stretch reads NSEVQCELKRKWRSRCPTPSASRDYRVCGSSFSRNGSEGALQFHRGSRAQSFLQTETSVI.

It belongs to the G-protein coupled receptor 2 family. As to quaternary structure, interacts with ADCYAP1/PACAP (via N-terminal extracellular domain); activated by PACAP27 and CAPAC38 neuropeptides. Interacts with VIP; the interaction results in VIPR1 activation. Expressed in CD4+ T-cells, but not in CD8+ T-cells. Expressed in the T-cell lines Jurkat, Peer, MOLT-4, HSB, YT and SUP-T1, but not in the T-cell lines HARRIS and HuT 78.

The protein resides in the cell membrane. Its function is as follows. G protein-coupled receptor activated by the neuropeptides vasoactive intestinal peptide (VIP) and pituitary adenylate cyclase-activating polypeptide (ADCYAP1/PACAP). Binds VIP and both PACAP27 and PACAP38 bioactive peptides with the following order of potency PACAP38 = VIP &gt; PACAP27. Ligand binding causes a conformation change that triggers signaling via guanine nucleotide-binding proteins (G proteins) and modulates the activity of downstream effectors. Activates cAMP-dependent pathway. May be coupled to phospholipase C. In Homo sapiens (Human), this protein is Vasoactive intestinal polypeptide receptor 2.